We begin with the raw amino-acid sequence, 480 residues long: Voltage-gated potassium channel regulatory subunit KCNG2 (480 aa).

Disordered stretches follow at residues 1–25 (MARL…GRGG) and 144–167 (AAEA…LGSG). Residues 1 to 187 (MARLPGHPEV…DVVENPHSGL (187 aa)) lie on the Cytoplasmic side of the membrane. The helical transmembrane segment at 188 to 209 (AGKLFAYVSVAFVAVTAVGLCL) threads the bilayer. Residues 210–230 (STMPDVRAEEERGECSTKCRN) are Extracellular-facing. A helical membrane pass occupies residues 231 to 252 (LFVLETVCVAWFSFEFLLRSLQ). Over 253-263 (AESKCAFLRTP) the chain is Cytoplasmic. Residues 264 to 284 (LAIIDILAILPFYVSLLAGLA) form a helical membrane-spanning segment. Residues 285 to 296 (AGPTGSKMLERA) are Extracellular-facing. The helical; Voltage-sensor transmembrane segment at 297–317 (GLVLRLLRALRVLYVMRLARH) threads the bilayer. The Cytoplasmic portion of the chain corresponds to 318–332 (SLGLRSLGLTVRRCA). The chain crosses the membrane as a helical span at residues 333–354 (REFGLLLLFLCVAMALFAPLVH). Over 355 to 369 (LAERELGAHRDFSSV) the chain is Extracellular. The helical intramembrane region spans 370 to 381 (PASYWWAVISMT). A Selectivity filter motif is present at residues 382-387 (TVGYGD). An intramembrane segment occupies 382-389 (TVGYGDMV). Topologically, residues 390-396 (PRSLPGQ) are extracellular. A helical transmembrane segment spans residues 397 to 425 (VVALSSILSGILLMAFPVTSIFHTFSRSY). The Cytoplasmic segment spans residues 426–480 (SELKEQQQRAASPEPVLREDSTRDDSTRSASATEDSSQDPETAGAAGSLPGPVGP). The tract at residues 429–480 (KEQQQRAASPEPVLREDSTRDDSTRSASATEDSSQDPETAGAAGSLPGPVGP) is disordered. Residues 441 to 452 (VLREDSTRDDST) show a composition bias toward basic and acidic residues.

This sequence belongs to the potassium channel family. G (TC 1.A.1.2) subfamily. Kv6.2/KCNG2 sub-subfamily. In terms of assembly, heterodimer with KCNB1. Highly expressed in heart, in particular in right and left atrium, and detected at lower levels in the right and left ventricle.

The protein localises to the cell membrane. Regulatory alpha-subunit of the voltage-gated potassium (Kv) channel which, when coassembled with KCNB1, can modulate the kinetics and conductance-voltage relationship. Modulates channel activity by shifting the threshold and the half-maximal activation to more negative values. Potassium channel subunit that does not form functional channels by itself. The sequence is that of Voltage-gated potassium channel regulatory subunit KCNG2 from Rattus norvegicus (Rat).